We begin with the raw amino-acid sequence, 398 residues long: Putative tyrosine-protein phosphatase C15H7.3 (398 aa).

Residues 1–15 show a composition bias toward basic residues; that stretch reads MERSQKSARKKKKTS. Residues 1 to 114 are disordered; it reads MERSQKSARK…EPWSEEEPAK (114 aa). Over residues 18 to 40 the composition is skewed to basic and acidic residues; it reads GNDRSIRSERKSKQKKPAGEKSQ. The span at 41 to 50 shows a compositional bias: basic residues; that stretch reads KSRRTRKSRG. A compositionally biased stretch (polar residues) spans 55–73; sequence GFTSRETIQPSSSGQSEGT. Positions 74–114 are enriched in basic and acidic residues; that stretch reads TRMDDQKDEKKDDKKEEKKEERKEEKKEEVKEPWSEEEPAK. The region spanning 125–376 is the Tyrosine-protein phosphatase domain; sequence TNVGGTFKQT…GTVHRSMACW (252 aa).

This sequence belongs to the protein-tyrosine phosphatase family. Non-receptor class subfamily.

It catalyses the reaction O-phospho-L-tyrosyl-[protein] + H2O = L-tyrosyl-[protein] + phosphate. The sequence is that of Putative tyrosine-protein phosphatase C15H7.3 from Caenorhabditis elegans.